A 737-amino-acid polypeptide reads, in one-letter code: Dipeptidyl peptidase 3 (737 aa).

Alanine 2 is modified (N-acetylalanine). Histidine 450 contributes to the Zn(2+) binding site. The active site involves glutamate 451. Zn(2+)-binding residues include histidine 455 and glutamate 508.

Belongs to the peptidase M49 family. The cofactor is Zn(2+). Detected in placenta (at protein level). Detected in erythrocytes (at protein level).

The protein resides in the cytoplasm. The protein localises to the cytosol. The enzyme catalyses Release of an N-terminal dipeptide from a peptide comprising four or more residues, with broad specificity. Also acts on dipeptidyl 2-naphthylamides.. Activated by Co(2+). Inhibited by EDTA and o-phenanthroline (in vitro). In terms of biological role, cleaves and degrades bioactive peptides, including angiotensin, Leu-enkephalin and Met-enkephalin. Also cleaves Arg-Arg-beta-naphthylamide (in vitro). This is Dipeptidyl peptidase 3 (DPP3) from Homo sapiens (Human).